The primary structure comprises 455 residues: Ribulose bisphosphate carboxylase large chain (455 aa).

Lys-5 carries the post-translational modification N6,N6,N6-trimethyllysine. Substrate-binding residues include Asn-114 and Thr-164. Catalysis depends on Lys-166, which acts as the Proton acceptor. Lys-168 is a substrate binding site. Residues Lys-192, Asp-194, and Glu-195 each contribute to the Mg(2+) site. Lys-192 carries the post-translational modification N6-carboxylysine. His-285 (proton acceptor) is an active-site residue. 3 residues coordinate substrate: Arg-286, His-318, and Ser-370.

It belongs to the RuBisCO large chain family. Type I subfamily. Heterohexadecamer of 8 large chains and 8 small chains; disulfide-linked. The disulfide link is formed within the large subunit homodimers. Mg(2+) is required as a cofactor. Post-translationally, the disulfide bond which can form in the large chain dimeric partners within the hexadecamer appears to be associated with oxidative stress and protein turnover.

The protein localises to the plastid. It is found in the chloroplast. The catalysed reaction is 2 (2R)-3-phosphoglycerate + 2 H(+) = D-ribulose 1,5-bisphosphate + CO2 + H2O. It catalyses the reaction D-ribulose 1,5-bisphosphate + O2 = 2-phosphoglycolate + (2R)-3-phosphoglycerate + 2 H(+). In terms of biological role, ruBisCO catalyzes two reactions: the carboxylation of D-ribulose 1,5-bisphosphate, the primary event in carbon dioxide fixation, as well as the oxidative fragmentation of the pentose substrate in the photorespiration process. Both reactions occur simultaneously and in competition at the same active site. This chain is Ribulose bisphosphate carboxylase large chain, found in Lupinus cosentinii (West Australian blue lupine).